Consider the following 446-residue polypeptide: Rhoptry surface protein CERLI1 (446 aa).

Residues 39 to 208 (KPIGQLYRLM…NQTKNNEKIE (170 aa)) form the C2 domain. Positions 252–363 (GYLLHSNFYI…ILVSNYKRER (112 aa)) constitute a PH domain.

The protein localises to the cytoplasmic vesicle. Its subcellular location is the secretory vesicle. The protein resides in the rhoptry membrane. Functionally, essential for merozoite invasion of host cells by controlling rhoptry secretion. Binds to phosphatidic acid (PA) and phosphatidylinositol 4,5-bisphosphate (PIP2) lipids and thus, likely contributes to the assembly of the machinery that docks or primes the rhoptry to the parasite cell membrane prior to the fusion with the host cell membrane. This is Rhoptry surface protein CERLI1 from Plasmodium falciparum (isolate 3D7).